Here is a 111-residue protein sequence, read N- to C-terminus: Gene 81 protein (111 aa).

In Mycobacterium (Mycobacteriophage L5), this protein is Gene 81 protein (81).